Reading from the N-terminus, the 502-residue chain is Glycerol kinase (502 aa).

Threonine 14 is a binding site for ADP. Residues threonine 14, threonine 15, and serine 16 each contribute to the ATP site. Sn-glycerol 3-phosphate is bound at residue threonine 14. Arginine 18 serves as a coordination point for ADP. 4 residues coordinate sn-glycerol 3-phosphate: arginine 84, glutamate 85, tyrosine 136, and aspartate 246. The glycerol site is built by arginine 84, glutamate 85, tyrosine 136, aspartate 246, and glutamine 247. The ADP site is built by threonine 268 and glycine 311. ATP contacts are provided by threonine 268, glycine 311, glutamine 315, and glycine 412. ADP-binding residues include glycine 412 and asparagine 416.

It belongs to the FGGY kinase family. Homotetramer and homodimer (in equilibrium). Heterodimer with EIIA-Glc. Binds 1 zinc ion per glycerol kinase EIIA-Glc dimer. The zinc ion is important for dimerization.

It carries out the reaction glycerol + ATP = sn-glycerol 3-phosphate + ADP + H(+). It participates in polyol metabolism; glycerol degradation via glycerol kinase pathway; sn-glycerol 3-phosphate from glycerol: step 1/1. Its activity is regulated as follows. Activity of this regulatory enzyme is affected by several metabolites. Allosterically and non-competitively inhibited by fructose 1,6-bisphosphate (FBP) and unphosphorylated phosphocarrier protein EIIA-Glc (III-Glc), an integral component of the bacterial phosphotransferase (PTS) system. Key enzyme in the regulation of glycerol uptake and metabolism. Catalyzes the phosphorylation of glycerol to yield sn-glycerol 3-phosphate. This is Glycerol kinase from Citrobacter koseri (strain ATCC BAA-895 / CDC 4225-83 / SGSC4696).